The following is a 567-amino-acid chain: DNA ligase (567 aa).

An ATP-binding site is contributed by glutamate 246. Residue lysine 248 is the N6-AMP-lysine intermediate of the active site. Residues arginine 253, arginine 268, glutamate 298, phenylalanine 339, arginine 415, and lysine 421 each contribute to the ATP site.

It belongs to the ATP-dependent DNA ligase family. The cofactor is Mg(2+).

The catalysed reaction is ATP + (deoxyribonucleotide)n-3'-hydroxyl + 5'-phospho-(deoxyribonucleotide)m = (deoxyribonucleotide)n+m + AMP + diphosphate.. In terms of biological role, DNA ligase that seals nicks in double-stranded DNA during DNA replication, DNA recombination and DNA repair. This is DNA ligase from Nanoarchaeum equitans (strain Kin4-M).